The following is a 333-amino-acid chain: L-lactate dehydrogenase B chain (333 aa).

NAD(+) contacts are provided by residues 29–57 (GQVG…LEDK) and Arg-99. Substrate-binding residues include Arg-106, Asn-138, and Arg-169. Asn-138 lines the NAD(+) pocket. The active-site Proton acceptor is the His-193. Thr-248 lines the substrate pocket.

It belongs to the LDH/MDH superfamily. LDH family. In terms of assembly, homotetramer.

The protein localises to the cytoplasm. It catalyses the reaction (S)-lactate + NAD(+) = pyruvate + NADH + H(+). The protein operates within fermentation; pyruvate fermentation to lactate; (S)-lactate from pyruvate: step 1/1. Functionally, interconverts simultaneously and stereospecifically pyruvate and lactate with concomitant interconversion of NADH and NAD(+). This chain is L-lactate dehydrogenase B chain (LDHB), found in Sceloporus woodi (Florida scrub lizard).